The chain runs to 154 residues: Toxin YhaV (154 aa).

As to quaternary structure, homohexamer; forms a complex with PrlF (SohA) with stoichiometry PrlF(2)-YhaV(4), possibly as a YhaV(2)-PrlF(2)-YhaV(2) complex like the MazFE complex. May dimerize in solution.

In terms of biological role, toxic component of a type II toxin-antitoxin (TA) system. Has RNase activity in vitro. Acts as a transcription factor. The YhaV/PrlF complex binds the prlF-yhaV operon, probably negatively regulating its expression. This is Toxin YhaV (yhaV) from Escherichia coli O157:H7.